Here is a 169-residue protein sequence, read N- to C-terminus: uncharacterized protein (169 aa).

It to M.tuberculosis Rv1480.

This is an uncharacterized protein from Mycobacterium avium.